A 304-amino-acid polypeptide reads, in one-letter code: Uricase (304 aa).

Position 2 is an N-acetylalanine (alanine 2). Lysine 10 and lysine 23 each carry N6-acetyllysine; alternate. An N6-succinyllysine; alternate mark is found at lysine 10 and lysine 23. Residue lysine 23 is the Charge relay system of the active site. Lysine 27 and lysine 36 each carry N6-acetyllysine. 2 positions are modified to phosphoserine: serine 39 and serine 63. The active-site Charge relay system is the threonine 68. Positions 68 and 69 each coordinate urate. N6-acetyllysine occurs at positions 118, 122, and 164. Phenylalanine 170 contributes to the urate binding site. N6-acetyllysine is present on residues lysine 175 and lysine 185. Arginine 187 contributes to the urate binding site. N6-acetyllysine; alternate occurs at positions 221 and 228. An N6-succinyllysine; alternate mark is found at lysine 221 and lysine 228. At serine 232 the chain carries Phosphoserine. Residues valine 235, glutamine 236, and asparagine 262 each coordinate urate. The active-site Charge relay system is histidine 264. An N6-acetyllysine modification is found at lysine 278. Tyrosine 289 is modified (phosphotyrosine). The short motif at 302–304 (SRL) is the Microbody targeting signal element.

It belongs to the uricase family. As to quaternary structure, homotetramer.

It is found in the peroxisome. The enzyme catalyses urate + O2 + H2O = 5-hydroxyisourate + H2O2. It participates in purine metabolism; urate degradation; (S)-allantoin from urate: step 1/3. Functionally, catalyzes the oxidation of uric acid to 5-hydroxyisourate, which is further processed to form (S)-allantoin. This Bos taurus (Bovine) protein is Uricase (UOX).